The chain runs to 196 residues: Thymidine kinase (196 aa).

ATP-binding positions include 9-16 (GTMNSGKS) and 85-88 (DEAQ). Glu86 acts as the Proton acceptor in catalysis. Residues Cys143, Cys146, Cys180, and His183 each coordinate Zn(2+).

It belongs to the thymidine kinase family. In terms of assembly, homotetramer.

The protein resides in the cytoplasm. The enzyme catalyses thymidine + ATP = dTMP + ADP + H(+). This is Thymidine kinase from Streptococcus thermophilus (strain CNRZ 1066).